A 666-amino-acid chain; its full sequence is tRNA 5-methylaminomethyl-2-thiouridine biosynthesis bifunctional protein MnmC (666 aa).

Positions 1–245 (MKQYAIQPAT…KREMLCGVME (245 aa)) are tRNA (mnm(5)s(2)U34)-methyltransferase. The interval 270 to 666 (IGGGIASALL…RKLLKGKAVK (397 aa)) is FAD-dependent cmnm(5)s(2)U34 oxidoreductase.

The protein in the N-terminal section; belongs to the methyltransferase superfamily. tRNA (mnm(5)s(2)U34)-methyltransferase family. It in the C-terminal section; belongs to the DAO family. FAD serves as cofactor.

Its subcellular location is the cytoplasm. The enzyme catalyses 5-aminomethyl-2-thiouridine(34) in tRNA + S-adenosyl-L-methionine = 5-methylaminomethyl-2-thiouridine(34) in tRNA + S-adenosyl-L-homocysteine + H(+). Catalyzes the last two steps in the biosynthesis of 5-methylaminomethyl-2-thiouridine (mnm(5)s(2)U) at the wobble position (U34) in tRNA. Catalyzes the FAD-dependent demodification of cmnm(5)s(2)U34 to nm(5)s(2)U34, followed by the transfer of a methyl group from S-adenosyl-L-methionine to nm(5)s(2)U34, to form mnm(5)s(2)U34. In Salmonella choleraesuis (strain SC-B67), this protein is tRNA 5-methylaminomethyl-2-thiouridine biosynthesis bifunctional protein MnmC.